A 210-amino-acid polypeptide reads, in one-letter code: MQGRFITFEGGEGAGKSTQIAQLTQSLQAHGVKVLCTREPGGCPISERIREILVTGQGDDLDGTSELLLILAARHEHIRQVIRPALASGHWVLCDRFEDSTLAYQGGGRGGDGPWLRQLGQWIRGDVFPDLTLLLDLDPTVGLARSKRRGGQEQRFEQEALSFHQQVRQAFLQMAQQEPQRMIPIDADQPVQMVAATIWREVEGRFFVSF.

10–17 (GGEGAGKS) contacts ATP.

The protein belongs to the thymidylate kinase family.

The catalysed reaction is dTMP + ATP = dTDP + ADP. In terms of biological role, phosphorylation of dTMP to form dTDP in both de novo and salvage pathways of dTTP synthesis. This Magnetococcus marinus (strain ATCC BAA-1437 / JCM 17883 / MC-1) protein is Thymidylate kinase.